A 129-amino-acid polypeptide reads, in one-letter code: Large ribosomal subunit protein uL22 (129 aa).

This sequence belongs to the universal ribosomal protein uL22 family. As to quaternary structure, part of the 50S ribosomal subunit.

Its function is as follows. This protein binds specifically to 23S rRNA; its binding is stimulated by other ribosomal proteins, e.g. L4, L17, and L20. It is important during the early stages of 50S assembly. It makes multiple contacts with different domains of the 23S rRNA in the assembled 50S subunit and ribosome. Functionally, the globular domain of the protein is located near the polypeptide exit tunnel on the outside of the subunit, while an extended beta-hairpin is found that lines the wall of the exit tunnel in the center of the 70S ribosome. The chain is Large ribosomal subunit protein uL22 from Brucella abortus (strain 2308).